Reading from the N-terminus, the 135-residue chain is uncharacterized protein (135 aa).

This is an uncharacterized protein from Methanocaldococcus jannaschii (strain ATCC 43067 / DSM 2661 / JAL-1 / JCM 10045 / NBRC 100440) (Methanococcus jannaschii).